Consider the following 341-residue polypeptide: UDP-3-O-acylglucosamine N-acyltransferase (341 aa).

The active-site Proton acceptor is histidine 239.

The protein belongs to the transferase hexapeptide repeat family. LpxD subfamily. Homotrimer.

The catalysed reaction is a UDP-3-O-[(3R)-3-hydroxyacyl]-alpha-D-glucosamine + a (3R)-hydroxyacyl-[ACP] = a UDP-2-N,3-O-bis[(3R)-3-hydroxyacyl]-alpha-D-glucosamine + holo-[ACP] + H(+). Its pathway is bacterial outer membrane biogenesis; LPS lipid A biosynthesis. In terms of biological role, catalyzes the N-acylation of UDP-3-O-acylglucosamine using 3-hydroxyacyl-ACP as the acyl donor. Is involved in the biosynthesis of lipid A, a phosphorylated glycolipid that anchors the lipopolysaccharide to the outer membrane of the cell. The protein is UDP-3-O-acylglucosamine N-acyltransferase of Shewanella sp. (strain MR-4).